A 132-amino-acid polypeptide reads, in one-letter code: Flagellar assembly factor FliW (132 aa).

Belongs to the FliW family. In terms of assembly, interacts with translational regulator CsrA and flagellin(s).

It is found in the cytoplasm. Acts as an anti-CsrA protein, binds CsrA and prevents it from repressing translation of its target genes, one of which is flagellin. Binds to flagellin and participates in the assembly of the flagellum. This Borreliella afzelii (strain PKo) (Borrelia afzelii) protein is Flagellar assembly factor FliW.